The following is a 188-amino-acid chain: Capsid protein (188 aa).

A compositionally biased stretch (basic residues) spans 150–181 (RRRGGARASRSPRRRTPSPRRRRSQSPRRRRS). The tract at residues 150 to 188 (RRRGGARASRSPRRRTPSPRRRRSQSPRRRRSQSPSANC) is disordered. A phosphoserine; by host mark is found at Ser-160, Ser-167, and Ser-175. A 1; half-length repeat occupies 160-166 (SPRRRTP). Residues 160–182 (SPRRRTPSPRRRRSQSPRRRRSQ) form a 3 X 8 AA repeats of S-P-R-R-R-[PR]-S-Q region. The Bipartite nuclear localization signal motif lies at 163–180 (RRTPSPRRRRSQSPRRRR). Repeat copies occupy residues 167 to 174 (SPRRRRSQ) and 175 to 182 (SPRRRRSQ). Positions 182–188 (QSPSANC) are RNA binding.

Belongs to the orthohepadnavirus core antigen family. In terms of assembly, homodimerizes, then multimerizes. Interacts with cytosol exposed regions of viral L glycoprotein present in the reticulum-to-Golgi compartment. Interacts with human FLNB. Phosphorylated form interacts with host importin alpha; this interaction depends on the exposure of the NLS, which itself depends upon genome maturation and/or phosphorylation of the capsid protein. Interacts with host NUP153. Post-translationally, phosphorylated by host SRPK1, SRPK2, and maybe protein kinase C or GAPDH. Phosphorylation is critical for pregenomic RNA packaging. Protein kinase C phosphorylation is stimulated by HBx protein and may play a role in transport of the viral genome to the nucleus at the late step during the viral replication cycle.

The protein localises to the virion. Its subcellular location is the host cytoplasm. Its function is as follows. Self assembles to form an icosahedral capsid. Most capsids appear to be large particles with an icosahedral symmetry of T=4 and consist of 240 copies of capsid protein, though a fraction forms smaller T=3 particles consisting of 180 capsid proteins. Entering capsids are transported along microtubules to the nucleus. Phosphorylation of the capsid is thought to induce exposure of nuclear localization signal in the C-terminal portion of the capsid protein that allows binding to the nuclear pore complex via the importin (karyopherin-) alpha and beta. Capsids are imported in intact form through the nuclear pore into the nuclear basket, where it probably binds NUP153. Only capsids that contain the mature viral genome can release the viral DNA and capsid protein into the nucleoplasm. Immature capsids get stuck in the basket. Capsids encapsulate the pre-genomic RNA and the P protein. Pre-genomic RNA is reverse-transcribed into DNA while the capsid is still in the cytoplasm. The capsid can then either be directed to the nucleus, providing more genomes for transcription, or bud through the endoplasmic reticulum to provide new virions. The protein is Capsid protein of Marmota monax (Woodchuck).